Consider the following 235-residue polypeptide: Aspartate/glutamate leucyltransferase (235 aa).

The protein belongs to the R-transferase family. Bpt subfamily.

Its subcellular location is the cytoplasm. The enzyme catalyses N-terminal L-glutamyl-[protein] + L-leucyl-tRNA(Leu) = N-terminal L-leucyl-L-glutamyl-[protein] + tRNA(Leu) + H(+). The catalysed reaction is N-terminal L-aspartyl-[protein] + L-leucyl-tRNA(Leu) = N-terminal L-leucyl-L-aspartyl-[protein] + tRNA(Leu) + H(+). Functions in the N-end rule pathway of protein degradation where it conjugates Leu from its aminoacyl-tRNA to the N-termini of proteins containing an N-terminal aspartate or glutamate. This is Aspartate/glutamate leucyltransferase from Pseudomonas fluorescens (strain ATCC BAA-477 / NRRL B-23932 / Pf-5).